The chain runs to 576 residues: Adenine deaminase (576 aa).

Belongs to the metallo-dependent hydrolases superfamily. Adenine deaminase family. Requires Mn(2+) as cofactor.

It catalyses the reaction adenine + H2O + H(+) = hypoxanthine + NH4(+). The sequence is that of Adenine deaminase from Bacillus pumilus (strain SAFR-032).